The sequence spans 239 residues: tRNA (guanine-N(1)-)-methyltransferase (239 aa).

Residues Gly113 and 133-138 (IGDYVL) contribute to the S-adenosyl-L-methionine site. The segment at 218-239 (ERRPDLWAARATQNPPERKTNG) is disordered.

The protein belongs to the RNA methyltransferase TrmD family. As to quaternary structure, homodimer.

The protein resides in the cytoplasm. It catalyses the reaction guanosine(37) in tRNA + S-adenosyl-L-methionine = N(1)-methylguanosine(37) in tRNA + S-adenosyl-L-homocysteine + H(+). Its function is as follows. Specifically methylates guanosine-37 in various tRNAs. The polypeptide is tRNA (guanine-N(1)-)-methyltransferase (Nitrobacter winogradskyi (strain ATCC 25391 / DSM 10237 / CIP 104748 / NCIMB 11846 / Nb-255)).